We begin with the raw amino-acid sequence, 315 residues long: Ribose-phosphate pyrophosphokinase (315 aa).

Residues 37–39 (DGE) and 96–97 (RQ) each bind ATP. Mg(2+)-binding residues include H131 and D170. K194 is an active-site residue. D-ribose 5-phosphate contacts are provided by residues R196, D220, and 224 to 228 (DTGGT).

The protein belongs to the ribose-phosphate pyrophosphokinase family. Class I subfamily. As to quaternary structure, homohexamer. Mg(2+) serves as cofactor.

It localises to the cytoplasm. The catalysed reaction is D-ribose 5-phosphate + ATP = 5-phospho-alpha-D-ribose 1-diphosphate + AMP + H(+). The protein operates within metabolic intermediate biosynthesis; 5-phospho-alpha-D-ribose 1-diphosphate biosynthesis; 5-phospho-alpha-D-ribose 1-diphosphate from D-ribose 5-phosphate (route I): step 1/1. Involved in the biosynthesis of the central metabolite phospho-alpha-D-ribosyl-1-pyrophosphate (PRPP) via the transfer of pyrophosphoryl group from ATP to 1-hydroxyl of ribose-5-phosphate (Rib-5-P). This is Ribose-phosphate pyrophosphokinase from Buchnera aphidicola subsp. Schizaphis graminum (strain Sg).